The following is a 116-amino-acid chain: Large ribosomal subunit protein bL19 (116 aa).

Belongs to the bacterial ribosomal protein bL19 family.

In terms of biological role, this protein is located at the 30S-50S ribosomal subunit interface and may play a role in the structure and function of the aminoacyl-tRNA binding site. The protein is Large ribosomal subunit protein bL19 of Pseudomonas putida (strain W619).